Consider the following 265-residue polypeptide: MNSPIDPAIVMPDVQSSTDTRHIPIQRVGIRGVRHPMLVLAGDGAAQPTVANWTLTVALPAEEKGTHMSRFVALLEKYRATPMTPALFAAMAREMLPLLHAERGDITASFPYFINKSAPVSGVQSLLDYEMQWIARAVGEQVEFELVAQVPVTSLCPCSKAISEYGAHNQRSHVTVSAIVDGDFRMDELIRLVEDEASCELWGLLKRPDEKYVTERAYDNPKFVEDLVRDVAARLKAHPGIGRFRVEAENFESIHNHSAYAVVEG.

This sequence belongs to the GTP cyclohydrolase IV family.

The catalysed reaction is GTP + H2O = 7,8-dihydroneopterin 3'-triphosphate + formate + H(+). Its pathway is cofactor biosynthesis; 7,8-dihydroneopterin triphosphate biosynthesis; 7,8-dihydroneopterin triphosphate from GTP: step 1/1. In terms of biological role, converts GTP to 7,8-dihydroneopterin triphosphate. This chain is GTP cyclohydrolase FolE2, found in Bordetella bronchiseptica (strain ATCC BAA-588 / NCTC 13252 / RB50) (Alcaligenes bronchisepticus).